A 434-amino-acid chain; its full sequence is Adenylosuccinate synthetase (434 aa).

GTP is bound by residues 14-20 (GDEGKGK) and 42-44 (GHE). Residue Asp15 is the Proton acceptor of the active site. Residues Asp15 and Gly42 each coordinate Mg(2+). IMP-binding positions include 15-18 (DEGK), 40-43 (NSGH), Thr133, Arg147, Asn229, Thr244, and Arg308. The Proton donor role is filled by His43. 304–310 (VTTGRVR) is a binding site for substrate. GTP-binding positions include Arg310, 336–338 (KLD), and 422–424 (GTG).

The protein belongs to the adenylosuccinate synthetase family. In terms of assembly, homodimer. Mg(2+) serves as cofactor.

The protein resides in the cytoplasm. The enzyme catalyses IMP + L-aspartate + GTP = N(6)-(1,2-dicarboxyethyl)-AMP + GDP + phosphate + 2 H(+). It functions in the pathway purine metabolism; AMP biosynthesis via de novo pathway; AMP from IMP: step 1/2. Functionally, plays an important role in the salvage pathway for purine nucleotide biosynthesis. Catalyzes the first committed step in the biosynthesis of AMP from IMP. This chain is Adenylosuccinate synthetase, found in Theileria parva (East coast fever infection agent).